An 89-amino-acid polypeptide reads, in one-letter code: MPPCSATSRRSLPGPTPSARRWTVPWTRTARGLTGLCLLLSLTACATAPAPAVLCEHPLIDPTTQAGLIRAVAAYQDALDLCNALNQGD.

Polar residues predominate over residues 1-10; sequence MPPCSATSRR. Positions 1–21 are disordered; the sequence is MPPCSATSRRSLPGPTPSARR. A signal peptide spans 1–47; that stretch reads MPPCSATSRRSLPGPTPSARRWTVPWTRTARGLTGLCLLLSLTACAT.

As to quaternary structure, interacts (via C-terminus) with the spanin inner membrane subunit (via C-terminus). Part of the spanin complex which spans the entire periplasmic space. The spanin complex is composed of spanin inner membrane subunit and spanin outer membrane subunit.

The protein resides in the host cell outer membrane. Its function is as follows. Component of the spanin complex that disrupts the host outer membrane and participates in cell lysis during virus exit. The spanin complex conducts the final step in host lysis by disrupting the outer membrane after holin and endolysin action have permeabilized the inner membrane and degraded the host peptidoglycans. Host outer membrane disruption is possibly due to local fusion between the inner and outer membrane performed by the spanin complex. The chain is Probable spanin, outer lipoprotein subunit from Pseudomonas aeruginosa.